Consider the following 450-residue polypeptide: MRTKSLKKNRINVVTLGCSKNVYDSEILMGQLKANDKDVVHEEDGNIVVINTCGFIDNAKEQSVNTILEFVEKKQQGDVDKVFVTGCLSERYKPDLQKEIPDVDQYFGTTELPGLLSALEADYKHELIGERLTTTPKNYAYLKIAEGCDRPCSFCAIPLMRGGHKSTPIENLVTEAEKLAANGVKELILIAQDLTYYGLDLYKKRNLAELLENLVKVEGIEWIRLHYAFPTGFPMDVLEVMKREPKVCNYLDIPLQHISDDLLKSMRRGTTHEKTTKLLKEFRKTVPEMAIRTTLIVGYPGETEEHYQELKEWVKEMRFERLGCFTYSHEENTHAYNLEDDVPQEVKQERANEIMEIQSQISWELNQQKIGEVFNVVIDRKEGNYFIGRTEYDSPDVDNEVLIDATTVYLKTGDYYDVKIAEAADFDLYGEPLNVTTEKPKRKELKIKSV.

Residues 9 to 124 (NRINVVTLGC…LLSALEADYK (116 aa)) form the MTTase N-terminal domain. Residues cysteine 18, cysteine 53, cysteine 87, cysteine 148, cysteine 152, and cysteine 155 each coordinate [4Fe-4S] cluster. Residues 134–365 (TTPKNYAYLK…EIQSQISWEL (232 aa)) enclose the Radical SAM core domain. The TRAM domain maps to 367–434 (QQKIGEVFNV…DFDLYGEPLN (68 aa)).

It belongs to the methylthiotransferase family. RimO subfamily. The cofactor is [4Fe-4S] cluster.

The protein resides in the cytoplasm. The enzyme catalyses L-aspartate(89)-[ribosomal protein uS12]-hydrogen + (sulfur carrier)-SH + AH2 + 2 S-adenosyl-L-methionine = 3-methylsulfanyl-L-aspartate(89)-[ribosomal protein uS12]-hydrogen + (sulfur carrier)-H + 5'-deoxyadenosine + L-methionine + A + S-adenosyl-L-homocysteine + 2 H(+). Functionally, catalyzes the methylthiolation of an aspartic acid residue of ribosomal protein uS12. The polypeptide is Ribosomal protein uS12 methylthiotransferase RimO (Christiangramia forsetii (strain DSM 17595 / CGMCC 1.15422 / KT0803) (Gramella forsetii)).